A 225-amino-acid chain; its full sequence is NAD(P)H-quinone oxidoreductase subunit K, chloroplastic (225 aa).

4 residues coordinate [4Fe-4S] cluster: C43, C44, C108, and C139.

Belongs to the complex I 20 kDa subunit family. In terms of assembly, NDH is composed of at least 16 different subunits, 5 of which are encoded in the nucleus. The cofactor is [4Fe-4S] cluster.

The protein resides in the plastid. It localises to the chloroplast thylakoid membrane. It carries out the reaction a plastoquinone + NADH + (n+1) H(+)(in) = a plastoquinol + NAD(+) + n H(+)(out). It catalyses the reaction a plastoquinone + NADPH + (n+1) H(+)(in) = a plastoquinol + NADP(+) + n H(+)(out). Its function is as follows. NDH shuttles electrons from NAD(P)H:plastoquinone, via FMN and iron-sulfur (Fe-S) centers, to quinones in the photosynthetic chain and possibly in a chloroplast respiratory chain. The immediate electron acceptor for the enzyme in this species is believed to be plastoquinone. Couples the redox reaction to proton translocation, and thus conserves the redox energy in a proton gradient. This Amborella trichopoda protein is NAD(P)H-quinone oxidoreductase subunit K, chloroplastic.